The chain runs to 248 residues: Triosephosphate isomerase B (248 aa).

Substrate-binding residues include Asn11 and Lys13. The Electrophile role is filled by His95. The active-site Proton acceptor is the Glu165.

The protein belongs to the triosephosphate isomerase family. Homodimer.

It localises to the cytoplasm. It carries out the reaction dihydroxyacetone phosphate = methylglyoxal + phosphate. It catalyses the reaction D-glyceraldehyde 3-phosphate = dihydroxyacetone phosphate. It participates in carbohydrate degradation; glycolysis; D-glyceraldehyde 3-phosphate from glycerone phosphate: step 1/1. It functions in the pathway carbohydrate biosynthesis; gluconeogenesis. Triosephosphate isomerase is an extremely efficient metabolic enzyme that catalyzes the interconversion between dihydroxyacetone phosphate (DHAP) and D-glyceraldehyde-3-phosphate (G3P) in glycolysis and gluconeogenesis. In terms of biological role, it is also responsible for the non-negligible production of methylglyoxal a reactive cytotoxic side-product that modifies and can alter proteins, DNA and lipids. The chain is Triosephosphate isomerase B (tpi1b) from Danio rerio (Zebrafish).